The primary structure comprises 930 residues: Vacuolar membrane protease (930 aa).

A disordered region spans residues 1–28 (MPQEEVHDTSSVSDDNLTNTGGGGSNYY). The Cytoplasmic segment spans residues 1–49 (MPQEEVHDTSSVSDDNLTNTGGGGSNYYNSHNQPNVFVRAIRSIFGYRK). The chain crosses the membrane as a helical span at residues 50 to 70 (TSLTLFVILTIIFTIALSLYD). The Vacuolar segment spans residues 71 to 379 (NNLDLTIELP…YFFSSPISAL (309 aa)). Asn163 carries an N-linked (GlcNAc...) asparagine glycan. The Zn(2+) site is built by His177 and Asp189. The active-site Proton acceptor is the Glu222. 3 residues coordinate Zn(2+): Glu223, Glu248, and His320. Asn354 is a glycosylation site (N-linked (GlcNAc...) asparagine). Residues 380 to 400 (VTINSVLIVLFPILSGPLLFI) form a helical membrane-spanning segment. Topologically, residues 401–411 (TVRYKKWKIGT) are cytoplasmic. A helical membrane pass occupies residues 412 to 432 (SNFLSLPLAIVLTVAIVMIVV). Topologically, residues 433 to 449 (NQGFQIANPFLPSSHPL) are vacuolar. The chain crosses the membrane as a helical span at residues 450–470 (LLVATTTSISLLIYYVFLNGV). Residues 471–480 (NWVSPSGDQK) are Cytoplasmic-facing. Residues 481 to 501 (LITIIEISFIYWLILIYVTHG) form a helical membrane-spanning segment. The Vacuolar portion of the chain corresponds to 502 to 514 (LSQNKIGDDHTGE). Residues 515-535 (FPFTVLFFLEATASLFGLIGW) traverse the membrane as a helical segment. Topologically, residues 536–598 (TFSRSIKQSS…FGYDWSLQYL (63 aa)) are cytoplasmic. Residues 542-570 (KQSSNDGSDEPLLTGTAERYGSDDTDEDE) are disordered. Residues 599 to 619 (LIVPISSLIIFNSGWLVLDGI) traverse the membrane as a helical segment. A glycan (N-linked (GlcNAc...) asparagine) is linked at Asn620. Over 620-631 (NKSIQESFAAEN) the chain is Vacuolar. Residues 632–652 (LIYLLIQLFSQFWILPILPFV) form a helical membrane-spanning segment. The Cytoplasmic segment spans residues 653–657 (YKLNR). The helical transmembrane segment at 658–678 (FIVFGLTIFAISGVALISFLD) threads the bilayer. Residues 679–930 (PFNQENPLKL…LVSVSLKIEV (252 aa)) lie on the Vacuolar side of the membrane. Asn697, Asn768, Asn808, and Asn890 each carry an N-linked (GlcNAc...) asparagine glycan.

The protein belongs to the peptidase M28 family. Zn(2+) is required as a cofactor.

The protein localises to the vacuole membrane. May be involved in vacuolar sorting and osmoregulation. This chain is Vacuolar membrane protease, found in Candida dubliniensis (strain CD36 / ATCC MYA-646 / CBS 7987 / NCPF 3949 / NRRL Y-17841) (Yeast).